The sequence spans 102 residues: MSAPLRIRENGIDLFVRLTPKSSLDRLEGVETSADGRSHLKARVRAVPENGAANQALERLVAKTLGVPASSVSVVAGGTSRLKTVRIVGDPEALAQRVEALG.

This sequence belongs to the UPF0235 family.

In Mesorhizobium japonicum (strain LMG 29417 / CECT 9101 / MAFF 303099) (Mesorhizobium loti (strain MAFF 303099)), this protein is UPF0235 protein msl4154.